The primary structure comprises 420 residues: UDP-N-acetylglucosamine 1-carboxyvinyltransferase (420 aa).

Residue 22 to 23 (KN) participates in phosphoenolpyruvate binding. R92 contributes to the UDP-N-acetyl-alpha-D-glucosamine binding site. Residue C116 is the Proton donor of the active site. A 2-(S-cysteinyl)pyruvic acid O-phosphothioketal modification is found at C116. Positions 306 and 328 each coordinate UDP-N-acetyl-alpha-D-glucosamine.

Belongs to the EPSP synthase family. MurA subfamily.

Its subcellular location is the cytoplasm. The catalysed reaction is phosphoenolpyruvate + UDP-N-acetyl-alpha-D-glucosamine = UDP-N-acetyl-3-O-(1-carboxyvinyl)-alpha-D-glucosamine + phosphate. Its pathway is cell wall biogenesis; peptidoglycan biosynthesis. Cell wall formation. Adds enolpyruvyl to UDP-N-acetylglucosamine. The protein is UDP-N-acetylglucosamine 1-carboxyvinyltransferase of Blochmanniella floridana.